The sequence spans 458 residues: Probable alpha-L-glutamate ligase (458 aa).

The unknown stretch occupies residues 1-162 (MSDNKFIIGS…YGVKSAKKSG (162 aa)). Residues 163-458 (LKIGLLASNP…IEKKLGWKAE (296 aa)) are alpha-L-glutamate ligase. Positions 267–450 (LQLLQKNNLD…IAGAMIDSIE (184 aa)) constitute an ATP-grasp domain. Residues Lys-304, 341–342 (EF), Asp-350, and 374–376 (RAN) each bind ATP. Mg(2+) is bound by residues Asp-411, Glu-423, and Asn-425. Residues Asp-411, Glu-423, and Asn-425 each contribute to the Mn(2+) site.

It in the C-terminal section; belongs to the RimK family. It depends on Mg(2+) as a cofactor. Mn(2+) serves as cofactor.

The sequence is that of Probable alpha-L-glutamate ligase from Shewanella halifaxensis (strain HAW-EB4).